The following is a 448-amino-acid chain: Trigger factor (448 aa).

Positions 172-257 (GDRVTVDFVG…MKKIEWPHLP (86 aa)) constitute a PPIase FKBP-type domain.

This sequence belongs to the FKBP-type PPIase family. Tig subfamily.

It is found in the cytoplasm. The enzyme catalyses [protein]-peptidylproline (omega=180) = [protein]-peptidylproline (omega=0). In terms of biological role, involved in protein export. Acts as a chaperone by maintaining the newly synthesized protein in an open conformation. Functions as a peptidyl-prolyl cis-trans isomerase. This chain is Trigger factor, found in Burkholderia orbicola (strain MC0-3).